An 878-amino-acid chain; its full sequence is MLYRLLSIVQRQRTSPGWQTWSSARSSTSTAEAHSIALPAQAQVVICGGGIMGTSVAYHLSKMGWQDIVLLEQGRLAAGSTRFCAGILSTARHSSVEQKMANYSNKLYHQLEQETGIQTGYLRTGSISLAQTQDRLISLKRINSRLNVVGIPSEIISPKKVAELHPLLNVHDLVGAMYVPEDAVVSSADVALALASAASQNGVQIYDRTSVLHVLIKKGQVTGVETDKGQIECQYFVNCAGQWAYELGLSNEEPLSIPLHACEHFYLLTRPWDTPLQSNTPTIVDADGRIYIRNWQGGILSGGFEKNPKPIFTEGKNQLEIQNLREDWDHFEPLLSSLLRRMPALETLEILKLVNCPETFTPDMKCIMGESPVVQGYFVLAGMNSAGLSLGGGAGKFLAEWMVYGYPSENVWELDLQRFGALQSSRTFLRHRVMEVMPLIYDLKVPRWDFQTGRQLRTSPLYDRLDAQGARWMEKHGFERPKYFVPPNKDLLALEQSKTFYKPDWFDIVESEVKCCKEAVCVIDMSSFTKFEITSTGDEALESLQYLFCNDLDVPVGHIVHTGMLNEYGGYENDCSIARLTKRSFFMISPTDQQVHCWAWLNKYLPKDSNLLLEDVTWKYTALNLIGPRAVDVLSELSYAPMTPDHFPTLFCKEMSVGYANGIRVMSMTHTGEPGFMLYIPIEYALHVYNEVMSVGQKYGIRNAGYYALRSLRIEKFFAFWGQDLNTLTTPLECGGESRVKLEKGIDFIGRDALLQQKQTGVYKRLAMFILDDHDTDLDLWPWWGEPIYRNGKYAGKTTSSAYSYTLERHVCLGYVHNFSEDSGEEQVVTTDFINRGEYEIDIAGHRFQAKAKLYPVTSFFTHKRRKDDVELSDFHGK.

A mitochondrion-targeting transit peptide spans 1–93; sequence MLYRLLSIVQ…CAGILSTARH (93 aa).

This sequence belongs to the GcvT family. Heterodimer of a catalytic (PDP1) and a regulatory (PDPR) subunit.

It is found in the mitochondrion matrix. Functionally, decreases the sensitivity of PDP1 to magnesium ions, and this inhibition is reversed by the polyamine spermine. The polypeptide is Pyruvate dehydrogenase phosphatase regulatory subunit, mitochondrial (Pdpr) (Mus musculus (Mouse)).